A 337-amino-acid chain; its full sequence is MAQELKLGYKASAEQFGPRELVELAVLAEQHGMDSVAVSDHFQPWRHNGGHAPFSLAWMTAVGERTERVQIGTSVMTPTFRYNPAVIAQAFATMGCLYPGRIMLGVGSGEALNEIATGFQGEWPEFKERFARLRESVRLMRELWLGDRVDFEGEYFTTRGASIYDVPEGGIPVYIAAGGPVVARYAGRAGDGFICTSGKGMELYTEKLLPAVAEGAAKAERDVADIDKMIEIKISYDTDPEAALENTRFWAPLSLTPEQKHSIEDPIEMEAAADALPIEQVAKRWIVASDPDDAVEQVKAYVDAGLNHLVFHAPGHDQRRFLELFERDLAPRLRALG.

Asp40 contributes to the coenzyme F420-(gamma-Glu)n binding site. His41 serves as the catalytic Proton donor. Residues Thr77 and 108-109 (SG) contribute to the coenzyme F420-(gamma-Glu)n site. Glu110 serves as the catalytic Proton acceptor. Residues Asn113, 178-179 (GG), and 181-182 (VV) each bind coenzyme F420-(gamma-Glu)n. Thr196, Lys199, Lys260, and Arg284 together coordinate substrate.

This sequence belongs to the F420-dependent glucose-6-phosphate dehydrogenase family. As to quaternary structure, homodimer.

The catalysed reaction is oxidized coenzyme F420-(gamma-L-Glu)(n) + D-glucose 6-phosphate + H(+) = 6-phospho-D-glucono-1,5-lactone + reduced coenzyme F420-(gamma-L-Glu)(n). In terms of biological role, catalyzes the coenzyme F420-dependent oxidation of glucose 6-phosphate (G6P) to 6-phosphogluconolactone. The protein is F420-dependent glucose-6-phosphate dehydrogenase of Rhodococcus erythropolis (strain PR4 / NBRC 100887).